The following is a 638-amino-acid chain: MRGGCISQGKAAAGLLFCVMVFASAERPVFTNHFLVELHRGGEEKARQVAAEHGFGVRKLPFAEGLYHFYHNGLAKARRRRSLQHQQQLERDPRVKRALQQEGFNRKKRGYRDINEIDINVNDPLFTKQWYLINTGQADGTPGLDLNVAEAWELGYTGKGVTIGIMDDGIDYLHPDLASNYNAEASYDFSSNDPYPYPRYTDDWSNSHGTRCAGEVSAAANNNICGVGVAYGSKVAGIRMLDQPFMTDIIEASSISHMPQLIDIYSASWGPTDNGKTVDGPRELTLQAMADGVNKGRGGKGSIYVWASGDGGSYDDCNCDGYASSMWTISINSAINDGRTALYDESCSSTLASTFSNGRKRNPEAGVATTDLYGNCTLRHSGTSAAAPEAAGVFALALEANLGLTWRDMQHLTVLTSKRNQLHDEVHQWRRNGVGLEFNHLFGYGVLDAGAMVKMAKDWKTVPERFHCVGGSVQNPEKIPTTGKPVLTLTTDACEGKENFVRYLEHVQAVVTVNATRRGDLNINMTSPMGTKSILLSRRPRGDDAKVGFDKWPFMTTHTWGEDARGTWILELGFVGSAPQKGVLMEWTLMLHGTQSAPYIDQVVRDYQSKLAMSKKEELEEELDEAVQRSLKSILGKD.

A signal peptide spans 1-25 (MRGGCISQGKAAAGLLFCVMVFASA). The propeptide occupies 26–109 (ERPVFTNHFL…QQEGFNRKKR (84 aa)). Residues 129-453 (QWYLINTGQA…YGVLDAGAMV (325 aa)) enclose the Peptidase S8 domain. Catalysis depends on charge relay system residues Asp167 and His208. 2 disulfide bridges follow: Cys225/Cys376 and Cys317/Cys347. The N-linked (GlcNAc...) asparagine glycan is linked to Asn375. Residue Ser384 is the Charge relay system of the active site. In terms of domain architecture, P/Homo B spans 461 to 597 (TVPERFHCVG…TLMLHGTQSA (137 aa)). An intrachain disulfide couples Cys468 to Cys494. Asn514 and Asn524 each carry an N-linked (GlcNAc...) asparagine glycan.

The protein belongs to the peptidase S8 family. Furin subfamily.

It localises to the cytoplasmic vesicle. Its subcellular location is the secretory vesicle. The protein localises to the secreted. It carries out the reaction Release of protein hormones and neuropeptides from their precursors, generally by hydrolysis of -Lys-Arg-|- bonds.. Functionally, serine endopeptidase which is involved in the processing of hormone and other protein precursors at sites comprised of pairs of basic amino acid residues. Responsible for the release of glucagon from proglucagon in pancreatic A cells. This is Neuroendocrine convertase 2 (PCSK2) from Bos taurus (Bovine).